Here is a 74-residue protein sequence, read N- to C-terminus: Anaphase-promoting complex subunit 13 (74 aa).

The segment at 33-53 is disordered; that stretch reads LNELPEPEQDNGGTTESVKEQ.

Belongs to the APC13 family. As to quaternary structure, the mammalian APC/C is composed at least of 14 distinct subunits ANAPC1, ANAPC2, CDC27/APC3, ANAPC4, ANAPC5, CDC16/APC6, ANAPC7, CDC23/APC8, ANAPC10, ANAPC11, CDC26/APC12, ANAPC13, ANAPC15 and ANAPC16 that assemble into a complex of at least 19 chains with a combined molecular mass of around 1.2 MDa; APC/C interacts with FZR1 and FBXO5.

The protein localises to the nucleus. The protein operates within protein modification; protein ubiquitination. Component of the anaphase promoting complex/cyclosome (APC/C), a cell cycle-regulated E3 ubiquitin ligase that controls progression through mitosis and the G1 phase of the cell cycle. The APC/C complex acts by mediating ubiquitination and subsequent degradation of target proteins: it mainly mediates the formation of 'Lys-11'-linked polyubiquitin chains and, to a lower extent, the formation of 'Lys-48'- and 'Lys-63'-linked polyubiquitin chains. The APC/C complex catalyzes assembly of branched 'Lys-11'-/'Lys-48'-linked branched ubiquitin chains on target proteins. The polypeptide is Anaphase-promoting complex subunit 13 (ANAPC13) (Bos taurus (Bovine)).